Here is a 316-residue protein sequence, read N- to C-terminus: uncharacterized protein (316 aa).

Residues 16-89 form the S4 RNA-binding domain; it reads ERLDKFLARA…IPINIIYEDE (74 aa). Residue D140 is part of the active site.

The protein belongs to the pseudouridine synthase RluA family.

The enzyme catalyses a uridine in RNA = a pseudouridine in RNA. This is an uncharacterized protein from Aquifex aeolicus (strain VF5).